A 279-amino-acid chain; its full sequence is Putative methyltransferase Jann_4284 (279 aa).

In Jannaschia sp. (strain CCS1), this protein is Putative methyltransferase Jann_4284.